The primary structure comprises 565 residues: Proline--tRNA ligase (565 aa).

The protein belongs to the class-II aminoacyl-tRNA synthetase family. ProS type 1 subfamily. In terms of assembly, homodimer.

It is found in the cytoplasm. The enzyme catalyses tRNA(Pro) + L-proline + ATP = L-prolyl-tRNA(Pro) + AMP + diphosphate. In terms of biological role, catalyzes the attachment of proline to tRNA(Pro) in a two-step reaction: proline is first activated by ATP to form Pro-AMP and then transferred to the acceptor end of tRNA(Pro). As ProRS can inadvertently accommodate and process non-cognate amino acids such as alanine and cysteine, to avoid such errors it has two additional distinct editing activities against alanine. One activity is designated as 'pretransfer' editing and involves the tRNA(Pro)-independent hydrolysis of activated Ala-AMP. The other activity is designated 'posttransfer' editing and involves deacylation of mischarged Ala-tRNA(Pro). The misacylated Cys-tRNA(Pro) is not edited by ProRS. The chain is Proline--tRNA ligase from Francisella tularensis subsp. novicida (strain U112).